The following is a 38-amino-acid chain: Histone H5 (38 aa).

A compositionally biased stretch (pro residues) spans 1–15 (TESPIPVPAPAPAAK). Residues 1–38 (TESPIPVPAPAPAAKPKPKRVSKRPASHPPYSDMIAAA) form a disordered region. Residues 16-26 (PKPKRVSKRPA) are compositionally biased toward basic residues.

Belongs to the histone H1/H5 family. In terms of tissue distribution, erythroid cells.

It localises to the nucleus. It is found in the chromosome. In terms of biological role, histone H5 performs the same function as H1, being necessary for the condensation of nucleosome chains into higher order structures, and replaces histone H1 in certain cells. This chain is Histone H5, found in Columba livia (Rock dove).